We begin with the raw amino-acid sequence, 373 residues long: Lipoyl synthase (373 aa).

Positions 12–36 are disordered; the sequence is HVVSNDHPSSSPLQPGVKQSGEDKI. Positions 81, 86, 92, 107, 111, 114, and 323 each coordinate [4Fe-4S] cluster. One can recognise a Radical SAM core domain in the interval 93-312; that stretch reads FSHGTATFMI…EEYGMALGFS (220 aa). Residues 346-373 form a disordered region; it reads PAVSSTEHRERHTIASKSASKTESIRHR.

The protein belongs to the radical SAM superfamily. Lipoyl synthase family. [4Fe-4S] cluster is required as a cofactor.

Its subcellular location is the cytoplasm. The catalysed reaction is [[Fe-S] cluster scaffold protein carrying a second [4Fe-4S](2+) cluster] + N(6)-octanoyl-L-lysyl-[protein] + 2 oxidized [2Fe-2S]-[ferredoxin] + 2 S-adenosyl-L-methionine + 4 H(+) = [[Fe-S] cluster scaffold protein] + N(6)-[(R)-dihydrolipoyl]-L-lysyl-[protein] + 4 Fe(3+) + 2 hydrogen sulfide + 2 5'-deoxyadenosine + 2 L-methionine + 2 reduced [2Fe-2S]-[ferredoxin]. Its pathway is protein modification; protein lipoylation via endogenous pathway; protein N(6)-(lipoyl)lysine from octanoyl-[acyl-carrier-protein]: step 2/2. Functionally, catalyzes the radical-mediated insertion of two sulfur atoms into the C-6 and C-8 positions of the octanoyl moiety bound to the lipoyl domains of lipoate-dependent enzymes, thereby converting the octanoylated domains into lipoylated derivatives. The polypeptide is Lipoyl synthase (Xylella fastidiosa (strain 9a5c)).